Reading from the N-terminus, the 317-residue chain is Transaldolase (317 aa).

The Schiff-base intermediate with substrate role is filled by Lys-126.

Belongs to the transaldolase family. Type 1 subfamily. Homodimer.

The protein localises to the cytoplasm. The enzyme catalyses D-sedoheptulose 7-phosphate + D-glyceraldehyde 3-phosphate = D-erythrose 4-phosphate + beta-D-fructose 6-phosphate. Its pathway is carbohydrate degradation; pentose phosphate pathway; D-glyceraldehyde 3-phosphate and beta-D-fructose 6-phosphate from D-ribose 5-phosphate and D-xylulose 5-phosphate (non-oxidative stage): step 2/3. Its function is as follows. Transaldolase is important for the balance of metabolites in the pentose-phosphate pathway. The polypeptide is Transaldolase (Burkholderia cenocepacia (strain ATCC BAA-245 / DSM 16553 / LMG 16656 / NCTC 13227 / J2315 / CF5610) (Burkholderia cepacia (strain J2315))).